A 258-amino-acid polypeptide reads, in one-letter code: Membrane-associated protein Vipp1 (258 aa).

The disordered stretch occupies residues 217 to 258 (MLPPATPVTQAQLPPQQETTPAKSNEVVDAELDSLRKQLDQL). Residues 223–239 (PVTQAQLPPQQETTPAK) are compositionally biased toward polar residues. The segment covering 249–258 (DSLRKQLDQL) has biased composition (basic and acidic residues).

It belongs to the PspA/Vipp/IM30 family. As to quaternary structure, polymerizes to form rings, filaments and ribbons. Rings are formed by stacked rungs that tilt to give a dome-shaped curvature. Rings form with symmetries ranging from C11 (55 subunits) to C17 (119 subunits).

It is found in the cell inner membrane. A membrane remodeling protein capable of forming rings and/or filaments on membranes, which then curve and tubulate the bilayer. Rings will form on liposomes, altering their positive curvature so the lipid bilayer is remodeled into a negative curve as the membrane enters the ring. Ring stacks of varying lengths can be seen joining isolated liposomes. A lipid monolayer can be drawn into the center of the rings. Required for thylakoid formation. This Nostoc punctiforme (strain ATCC 29133 / PCC 73102) protein is Membrane-associated protein Vipp1.